Here is a 478-residue protein sequence, read N- to C-terminus: METARGRVLSVASECVPLLKTGGLADVVGALPGALAAEGWEMRVLMPCYRPLRWRLEQMEEVFSEEDLFGGRGRVMAGEVAGRRMLLLDAPHLYDREGGPYAGPWGDWGDNAQRFAALSWIAARIAREGLSDGWRPEVLHAHDWQAGFAPAYLAYWGSGGVRSVLTVHNIAFQGWAPAALLPSLRLPASEFHPAALEYYGGLSSLKAGLVTADHITTVSPTYACELMRPEFGMGLQGVIAARAGQVSGILNGVDTDIWSPEAEERPYTARSLKAKAENRAVLSGAFKLDVPGPLAILVSRLTYQKGIDLIPEVLPDFIAAGGGLAVLGTGDAALEGAMRELEVRFSGRVGVRIGYDEGLSHLMFAGGDAVLVPSRFEPCGLTQMYGLRYGAIPVVALTGGLADTIINANPAALTAGCATGLTFHPTEPPAFAEALRRLIHLYADHALWEKVQKNAMRHPVGWQTSAAAYAALYRELVA.

Residue Lys20 coordinates ADP-alpha-D-glucose.

This sequence belongs to the glycosyltransferase 1 family. Bacterial/plant glycogen synthase subfamily.

The catalysed reaction is [(1-&gt;4)-alpha-D-glucosyl](n) + ADP-alpha-D-glucose = [(1-&gt;4)-alpha-D-glucosyl](n+1) + ADP + H(+). It functions in the pathway glycan biosynthesis; glycogen biosynthesis. Synthesizes alpha-1,4-glucan chains using ADP-glucose. This chain is Glycogen synthase, found in Cereibacter sphaeroides (strain ATCC 17025 / ATH 2.4.3) (Rhodobacter sphaeroides).